The primary structure comprises 185 residues: Ribosome-recycling factor (185 aa).

Belongs to the RRF family.

The protein localises to the cytoplasm. Functionally, responsible for the release of ribosomes from messenger RNA at the termination of protein biosynthesis. May increase the efficiency of translation by recycling ribosomes from one round of translation to another. This chain is Ribosome-recycling factor, found in Pseudomonas putida (strain W619).